A 376-amino-acid polypeptide reads, in one-letter code: Uroporphyrinogen decarboxylase (376 aa).

Substrate-binding positions include 29–33 (RQAGR), aspartate 79, tyrosine 155, serine 210, and histidine 342.

Belongs to the uroporphyrinogen decarboxylase family. Homodimer.

The protein localises to the cytoplasm. The enzyme catalyses uroporphyrinogen III + 4 H(+) = coproporphyrinogen III + 4 CO2. The protein operates within porphyrin-containing compound metabolism; protoporphyrin-IX biosynthesis; coproporphyrinogen-III from 5-aminolevulinate: step 4/4. Catalyzes the decarboxylation of four acetate groups of uroporphyrinogen-III to yield coproporphyrinogen-III. The protein is Uroporphyrinogen decarboxylase of Paracidovorax citrulli (strain AAC00-1) (Acidovorax citrulli).